Consider the following 169-residue polypeptide: Cell division inhibitor SulA (169 aa).

The interval 106 to 112 is ftsZ binding; it reads ALRTGNY. The interval 162–169 is lon protease binding; it reads KIHSNLYH.

This sequence belongs to the SulA family. Interacts with FtsZ. Is rapidly cleaved and degraded by the Lon protease once DNA damage is repaired.

In terms of biological role, component of the SOS system and an inhibitor of cell division. Accumulation of SulA causes rapid cessation of cell division and the appearance of long, non-septate filaments. In the presence of GTP, binds a polymerization-competent form of FtsZ in a 1:1 ratio, thus inhibiting FtsZ polymerization and therefore preventing it from participating in the assembly of the Z ring. This mechanism prevents the premature segregation of damaged DNA to daughter cells during cell division. This Escherichia coli O81 (strain ED1a) protein is Cell division inhibitor SulA.